A 1363-amino-acid polypeptide reads, in one-letter code: Zinc finger protein 541 (1363 aa).

Disordered stretches follow at residues 1-23 (MEPY…SFSE) and 106-137 (LGAL…SPQN). 3 consecutive C2H2-type zinc fingers follow at residues 140 to 162 (LDCS…YLTH), 168 to 190 (HVCK…MLTH), and 196 to 221 (FVCI…EVQH). 4 disordered regions span residues 232-269 (EEEA…GSVL), 286-387 (KIPS…GWPE), 440-532 (VASR…PGGL), and 574-741 (QVAT…GYRL). Residues 311–321 (SLGSSSCTPAS) show a composition bias toward polar residues. Positions 335–345 (EETHPPRKEAA) are enriched in basic and acidic residues. Residues 453-465 (PSSTPTSVEPSPS) show a composition bias toward low complexity. The segment covering 597–608 (GPWPPQTLPPAP) has biased composition (pro residues). The span at 659–670 (PPSLTGPGLLPS) shows a compositional bias: low complexity. The segment at 838–860 (FVCKNCSQMFYTEKGLSSHMCFH) adopts a C2H2-type 4 zinc-finger fold. A disordered region spans residues 935–978 (QGQEKDGEERDSKESCQYRKRKKRPQPKALFAPPAPSALGEPGP). Positions 937-951 (QEKDGEERDSKESCQ) are enriched in basic and acidic residues. The region spanning 1063-1155 (PHINVGSRFQ…VALETLLLRG (93 aa)) is the ELM2 domain. The 52-residue stretch at 1170-1221 (TGSDIWTPMEKRLFKKAFCAHKKDFYLIHKMIQTKSVAQCVEYYYIWKKMVK) folds into the SANT domain. A disordered region spans residues 1243–1298 (RTEDKVTCSPRERPTHRPTPELKIKTKSYRRESILHSSPSAAPKRTPEPPGSVESQ). A compositionally biased stretch (basic and acidic residues) spans 1244-1276 (TEDKVTCSPRERPTHRPTPELKIKTKSYRRESI). A C2H2-type 5 zinc finger spans residues 1301–1323 (FPCRECERVFDKIKSRNAHMKRH). The tract at residues 1343–1363 (LKEEEEEEEEELGADMGPLQW) is disordered. Acidic residues predominate over residues 1345 to 1355 (EEEEEEEEELG).

In terms of assembly, interacts with DNTTIP1. Identified in a complex with KCTD19, HDAC1 and HSPA2. Identified in a complex with HDAC1, HDAC2, DNTTIP1 and KCTD19. Identified in a complex with KCTD19 and HDAC1. As to expression, germ-cell-specific. Specifically present in testicular spermatogenic cells, but not in testicular and mature sperm. During spermatogenesis, it is present in spermatocytes and round spermatids only (at protein level).

It localises to the nucleus. Its function is as follows. Transcription regulator which is essential for male fertility and for the completion of meiotic prophase in spermatocytes. Regulates progression of the pachytene stage of meiotic prophase by activating the expression of genes involved in meiosis and post-meiosis during spermatogenesis. Maintains the repression of pre-pachytene transcriptional programs, including meiotic double-strand breaks (DSB) formation genes in pachytene spermatocytes and suppresses aberrant DSB formation after mid-pachytene, thus ensuring meiosis progression. This Mus musculus (Mouse) protein is Zinc finger protein 541 (Znf541).